Consider the following 296-residue polypeptide: Phosphate transport system permease protein PstA (296 aa).

Residues 1–28 (MAMVEMQTTAALAESRRKMQARRRLKNR) lie on the Cytoplasmic side of the membrane. Residues 29 to 50 (IALTLSMATMAFGLFWLIWILM) form a helical membrane-spanning segment. Topologically, residues 51–82 (STITRGIDGMSLALFTEMTPPPNTEGGGLANA) are periplasmic. Residues 83 to 102 (LAGSGLLILWATVFGTPLGI) form a helical membrane-spanning segment. One can recognise an ABC transmembrane type-1 domain in the interval 83-286 (LAGSGLLILW…LCVLLLNILA (204 aa)). Residues 103–126 (MAGIYLAEYGRKSWLAEVIRFIND) lie on the Cytoplasmic side of the membrane. A helical transmembrane segment spans residues 127 to 146 (ILLSAPSIVVGLFVYTIVVA). Over 147-150 (QMEH) the chain is Periplasmic. Residues 151–169 (FSGWAGVIALALLQVPIVI) traverse the membrane as a helical segment. The Cytoplasmic portion of the chain corresponds to 170–204 (RTTENMLKLVPYSLREAAYALGTPKWKMISAITLK). Residues 205–223 (ASVSGIMTGILLAIARIAG) traverse the membrane as a helical segment. At 224-266 (ETAPLLFTALSNQFWSTDMMQPIANLPVTIFKFAMSPFAEWQQ) the chain is on the periplasmic side. A helical transmembrane segment spans residues 267–286 (LAWAGVLIITLCVLLLNILA). At 287-296 (RVVFAKNKHG) the chain is on the cytoplasmic side.

Belongs to the binding-protein-dependent transport system permease family. CysTW subfamily.

Its subcellular location is the cell inner membrane. In terms of biological role, part of the binding-protein-dependent transport system for phosphate; probably responsible for the translocation of the substrate across the membrane. In Escherichia coli (strain K12), this protein is Phosphate transport system permease protein PstA (pstA).